The primary structure comprises 563 residues: Delta-1-pyrroline-5-carboxylate dehydrogenase, mitochondrial (563 aa).

The transit peptide at 1 to 23 directs the protein to the mitochondrion; it reads MLPPALLRRSLLSYAWRGSGLRW. An N6-succinyllysine modification is found at Lys-30. Residue Ser-43 is modified to Phosphoserine. An N6-acetyllysine modification is found at Lys-51. Lys-92, Lys-98, Lys-113, Lys-129, and Lys-174 each carry N6-acetyllysine; alternate. N6-succinyllysine; alternate is present on residues Lys-92, Lys-98, Lys-113, Lys-129, and Lys-174. Residues Ser-207, Lys-232, and 285–289 each bind NAD(+); that span reads GSVPT. Catalysis depends on Glu-313, which acts as the Proton acceptor. Lys-317 carries the post-translational modification N6-acetyllysine. Lys-346 is subject to N6-succinyllysine. Cys-347 (nucleophile) is an active-site residue. N6-acetyllysine occurs at positions 364 and 375. Lys-394 bears the N6-succinyllysine mark. Glu-446 contacts NAD(+). Lys-461 is subject to N6-acetyllysine. Lys-508 is modified (N6-acetyllysine; alternate). Lys-508 bears the N6-succinyllysine; alternate mark. Ser-512 contributes to the substrate binding site.

The protein belongs to the aldehyde dehydrogenase family. As to quaternary structure, homodimer.

It localises to the mitochondrion matrix. It catalyses the reaction L-glutamate 5-semialdehyde + NAD(+) + H2O = L-glutamate + NADH + 2 H(+). Its pathway is amino-acid degradation; L-proline degradation into L-glutamate; L-glutamate from L-proline: step 2/2. Irreversible conversion of delta-1-pyrroline-5-carboxylate (P5C), derived either from proline or ornithine, to glutamate. This is a necessary step in the pathway interconnecting the urea and tricarboxylic acid cycles. The preferred substrate is glutamic gamma-semialdehyde, other substrates include succinic, glutaric and adipic semialdehydes. This chain is Delta-1-pyrroline-5-carboxylate dehydrogenase, mitochondrial (Aldh4a1), found in Rattus norvegicus (Rat).